A 239-amino-acid chain; its full sequence is Ribonuclease PH (239 aa).

Phosphate-binding positions include arginine 86 and glycine 124–arginine 126.

It belongs to the RNase PH family. As to quaternary structure, homohexameric ring arranged as a trimer of dimers.

It carries out the reaction tRNA(n+1) + phosphate = tRNA(n) + a ribonucleoside 5'-diphosphate. In terms of biological role, phosphorolytic 3'-5' exoribonuclease that plays an important role in tRNA 3'-end maturation. Removes nucleotide residues following the 3'-CCA terminus of tRNAs; can also add nucleotides to the ends of RNA molecules by using nucleoside diphosphates as substrates, but this may not be physiologically important. Probably plays a role in initiation of 16S rRNA degradation (leading to ribosome degradation) during starvation. This chain is Ribonuclease PH, found in Psychromonas ingrahamii (strain DSM 17664 / CCUG 51855 / 37).